The sequence spans 245 residues: 1-(5-phosphoribosyl)-5-[(5-phosphoribosylamino)methylideneamino] imidazole-4-carboxamide isomerase (245 aa).

D8 (proton acceptor) is an active-site residue. Catalysis depends on D131, which acts as the Proton donor.

Belongs to the HisA/HisF family.

It is found in the cytoplasm. The catalysed reaction is 1-(5-phospho-beta-D-ribosyl)-5-[(5-phospho-beta-D-ribosylamino)methylideneamino]imidazole-4-carboxamide = 5-[(5-phospho-1-deoxy-D-ribulos-1-ylimino)methylamino]-1-(5-phospho-beta-D-ribosyl)imidazole-4-carboxamide. It functions in the pathway amino-acid biosynthesis; L-histidine biosynthesis; L-histidine from 5-phospho-alpha-D-ribose 1-diphosphate: step 4/9. This Neisseria meningitidis serogroup C (strain 053442) protein is 1-(5-phosphoribosyl)-5-[(5-phosphoribosylamino)methylideneamino] imidazole-4-carboxamide isomerase.